We begin with the raw amino-acid sequence, 442 residues long: UDP-N-acetylglucosamine 1-carboxyvinyltransferase (442 aa).

Position 22–23 (22–23 (KN)) interacts with phosphoenolpyruvate. Arg-94 serves as a coordination point for UDP-N-acetyl-alpha-D-glucosamine. Asp-119 (proton donor) is an active-site residue. Residues Asp-309 and Val-331 each coordinate UDP-N-acetyl-alpha-D-glucosamine.

The protein belongs to the EPSP synthase family. MurA subfamily.

It is found in the cytoplasm. The catalysed reaction is phosphoenolpyruvate + UDP-N-acetyl-alpha-D-glucosamine = UDP-N-acetyl-3-O-(1-carboxyvinyl)-alpha-D-glucosamine + phosphate. It participates in cell wall biogenesis; peptidoglycan biosynthesis. Its function is as follows. Cell wall formation. Adds enolpyruvyl to UDP-N-acetylglucosamine. The protein is UDP-N-acetylglucosamine 1-carboxyvinyltransferase of Chlamydia muridarum (strain MoPn / Nigg).